We begin with the raw amino-acid sequence, 82 residues long: Small ribosomal subunit protein bTHXm (82 aa).

The N-terminal 22 residues, 1-22, are a transit peptide targeting the mitochondrion; it reads MAMRLAAAAAFVRRLVPARNPV. Positions 34-56 are disordered; it reads RGDKKTKRGKRFKGSYGNARPKR. Over residues 37 to 46 the composition is skewed to basic residues; sequence KKTKRGKRFK.

This sequence belongs to the bacterial ribosomal protein bTHX family.

Its subcellular location is the mitochondrion. In Oryza sativa subsp. japonica (Rice), this protein is Small ribosomal subunit protein bTHXm.